The sequence spans 665 residues: Coiled-coil domain-containing protein 138 (665 aa).

Residue T48 is modified to Phosphothreonine. Position 49 is a phosphoserine (S49). The stretch at 198–323 forms a coiled coil; that stretch reads QQKFAEELQK…YEFMTIQRLK (126 aa). A Phosphoserine modification is found at S469.

This Homo sapiens (Human) protein is Coiled-coil domain-containing protein 138 (CCDC138).